Reading from the N-terminus, the 96-residue chain is Small ribosomal subunit protein bS6 (96 aa).

The protein belongs to the bacterial ribosomal protein bS6 family.

In terms of biological role, binds together with bS18 to 16S ribosomal RNA. The protein is Small ribosomal subunit protein bS6 of Streptococcus equi subsp. equi (strain 4047).